Here is a 139-residue protein sequence, read N- to C-terminus: Aspartate 1-decarboxylase (139 aa).

Catalysis depends on serine 25, which acts as the Schiff-base intermediate with substrate; via pyruvic acid. Serine 25 is subject to Pyruvic acid (Ser). Threonine 57 serves as a coordination point for substrate. Catalysis depends on tyrosine 58, which acts as the Proton donor. 73–75 serves as a coordination point for substrate; the sequence is GAA. The disordered stretch occupies residues 116–139; that stretch reads ELGEDPAHAPAGSGLKDPRHPEGE.

This sequence belongs to the PanD family. Heterooctamer of four alpha and four beta subunits. It depends on pyruvate as a cofactor. Post-translationally, is synthesized initially as an inactive proenzyme, which is activated by self-cleavage at a specific serine bond to produce a beta-subunit with a hydroxyl group at its C-terminus and an alpha-subunit with a pyruvoyl group at its N-terminus.

Its subcellular location is the cytoplasm. It catalyses the reaction L-aspartate + H(+) = beta-alanine + CO2. It participates in cofactor biosynthesis; (R)-pantothenate biosynthesis; beta-alanine from L-aspartate: step 1/1. Catalyzes the pyruvoyl-dependent decarboxylation of aspartate to produce beta-alanine. In Corynebacterium urealyticum (strain ATCC 43042 / DSM 7109), this protein is Aspartate 1-decarboxylase.